Reading from the N-terminus, the 349-residue chain is Ureidoglycolate dehydrogenase (NAD(+)) (349 aa).

H116 (proton acceptor) is an active-site residue. NAD(+) contacts are provided by residues S140, D174–A176, K224, and G306–D308.

The protein belongs to the LDH2/MDH2 oxidoreductase family. As to quaternary structure, homodimer.

The protein resides in the cytoplasm. The catalysed reaction is (S)-ureidoglycolate + NAD(+) = N-carbamoyl-2-oxoglycine + NADH + H(+). The protein operates within nitrogen metabolism; (S)-allantoin degradation; oxalurate from (S)-ureidoglycolate: step 1/1. In terms of biological role, allD plays a pivotal role as a metabolic branch-point enzyme in nitrogen utilization via the assimilation of allantoin. It is able to utilize allantoin as a sole source of nitrogen under anaerobic conditions. Catalyzes the oxidation of ureidoglycolate to oxalurate. This Escherichia coli O157:H7 protein is Ureidoglycolate dehydrogenase (NAD(+)).